The following is an 870-amino-acid chain: NEDD4-like E3 ubiquitin-protein ligase WWP2 (870 aa).

The C2 domain maps to 1 to 117 (MASASSSRAG…KNNGGKMENT (117 aa)). Positions 150-300 (SVPNGSAVTD…QLPAAAQAPD (151 aa)) are disordered. A compositionally biased stretch (polar residues) spans 152–171 (PNGSAVTDGSQPPSRESSGT). Residues 198–208 (GGSARTATAAS) are compositionally biased toward low complexity. S211 carries the post-translational modification Phosphoserine. 2 stretches are compositionally biased toward polar residues: residues 222-235 (VKNS…NGTV) and 262-289 (SVSS…TSGT). Positions 290 to 300 (QQLPAAAQAPD) are enriched in low complexity. WW domains lie at 300 to 333 (DALP…RPLP), 330 to 363 (RPLP…RPTA), 405 to 437 (GPLP…DPRT), and 444 to 477 (PALP…DPRP). In terms of domain architecture, HECT spans 536 to 870 (KPYDLRRRLY…IEETEGFGQE (335 aa)). The active-site Glycyl thioester intermediate is C838.

As to quaternary structure, interacts with SCNN1A, SCNN1B, SCNN1G, WBP1, WBP2 and ATN1. Interacts with ERBB4, NDFIP1 and NDFIP2. Interacts with ARRDC4. Interacts with POU5F1, RBP1, EGR2 and SLC11A2. Interacts (via WW domains) with ARRDC1 (via PPxY motifs); ubiquitinates ARRDC1. Interacts (via WW domains) with ARRDC2 and ARRDC3. In terms of processing, autoubiquitinated. Ubiquitinated by the SCF(FBXL15) complex, leading to its degradation by the proteasome.

It localises to the nucleus. The enzyme catalyses S-ubiquitinyl-[E2 ubiquitin-conjugating enzyme]-L-cysteine + [acceptor protein]-L-lysine = [E2 ubiquitin-conjugating enzyme]-L-cysteine + N(6)-ubiquitinyl-[acceptor protein]-L-lysine.. It functions in the pathway protein modification; protein ubiquitination. With respect to regulation, activated by NDFIP1- and NDFIP2-binding. Functionally, E3 ubiquitin-protein ligase which accepts ubiquitin from an E2 ubiquitin-conjugating enzyme in the form of a thioester and then directly transfers the ubiquitin to targeted substrates. Polyubiquitinates POU5F1 by 'Lys-63'-linked conjugation and promotes it to proteasomal degradation; regulates POU5F1 protein level during differentiation of embryonal carcinoma cells (ECCs) but not in undifferentiated ECCs and embryonic stem cells (ESCs). Ubiquitinates EGR2 and promotes it to proteasomal degradation; in T-cells the ubiquitination inhibits activation-induced cell death. Ubiquitinates SLC11A2; the ubiquitination is enhanced by presence of NDFIP1 and NDFIP2. Ubiquitinates RPB1 and promotes it to proteasomal degradation. This chain is NEDD4-like E3 ubiquitin-protein ligase WWP2 (Wwp2), found in Mus musculus (Mouse).